The sequence spans 247 residues: Pyridoxine 5'-phosphate synthase (247 aa).

Asparagine 9 is a 3-amino-2-oxopropyl phosphate binding site. A 1-deoxy-D-xylulose 5-phosphate-binding site is contributed by 11–12; it reads DH. Arginine 20 lines the 3-amino-2-oxopropyl phosphate pocket. Histidine 45 acts as the Proton acceptor in catalysis. 1-deoxy-D-xylulose 5-phosphate-binding residues include arginine 47 and histidine 52. Glutamate 72 (proton acceptor) is an active-site residue. Threonine 102 contacts 1-deoxy-D-xylulose 5-phosphate. Histidine 193 acts as the Proton donor in catalysis. 3-amino-2-oxopropyl phosphate is bound by residues glycine 194 and 215 to 216; that span reads GH.

Belongs to the PNP synthase family. As to quaternary structure, homooctamer; tetramer of dimers.

The protein localises to the cytoplasm. The enzyme catalyses 3-amino-2-oxopropyl phosphate + 1-deoxy-D-xylulose 5-phosphate = pyridoxine 5'-phosphate + phosphate + 2 H2O + H(+). The protein operates within cofactor biosynthesis; pyridoxine 5'-phosphate biosynthesis; pyridoxine 5'-phosphate from D-erythrose 4-phosphate: step 5/5. Catalyzes the complicated ring closure reaction between the two acyclic compounds 1-deoxy-D-xylulose-5-phosphate (DXP) and 3-amino-2-oxopropyl phosphate (1-amino-acetone-3-phosphate or AAP) to form pyridoxine 5'-phosphate (PNP) and inorganic phosphate. In Blochmanniella floridana, this protein is Pyridoxine 5'-phosphate synthase.